A 187-amino-acid chain; its full sequence is UPF0398 protein MW1336 (187 aa).

This sequence belongs to the UPF0398 family.

This Staphylococcus aureus (strain MW2) protein is UPF0398 protein MW1336.